The sequence spans 346 residues: Biotin synthase (346 aa).

One can recognise a Radical SAM core domain in the interval 38–256 (RQVQVSTLLS…IAIARIMMPT (219 aa)). Positions 53, 57, and 60 each coordinate [4Fe-4S] cluster. [2Fe-2S] cluster is bound by residues Cys97, Cys128, Cys188, and Arg260.

The protein belongs to the radical SAM superfamily. Biotin synthase family. In terms of assembly, homodimer. It depends on [4Fe-4S] cluster as a cofactor. Requires [2Fe-2S] cluster as cofactor.

The enzyme catalyses (4R,5S)-dethiobiotin + (sulfur carrier)-SH + 2 reduced [2Fe-2S]-[ferredoxin] + 2 S-adenosyl-L-methionine = (sulfur carrier)-H + biotin + 2 5'-deoxyadenosine + 2 L-methionine + 2 oxidized [2Fe-2S]-[ferredoxin]. It participates in cofactor biosynthesis; biotin biosynthesis; biotin from 7,8-diaminononanoate: step 2/2. Catalyzes the conversion of dethiobiotin (DTB) to biotin by the insertion of a sulfur atom into dethiobiotin via a radical-based mechanism. The protein is Biotin synthase of Klebsiella pneumoniae (strain 342).